The chain runs to 453 residues: Ribosomal protein uS12 methylthiotransferase RimO (453 aa).

The MTTase N-terminal domain maps to 5–120 (PKVGFVSLGC…VMQAVHSHLP (116 aa)). Residues Cys-14, Cys-50, Cys-79, Cys-151, Cys-155, and Cys-158 each contribute to the [4Fe-4S] cluster site. The Radical SAM core domain occupies 137–382 (LTPRHYAYLK…MEVAEEVSAR (246 aa)). One can recognise a TRAM domain in the interval 385–453 (QRKVGKTLKV…ADGHDLWGEV (69 aa)).

This sequence belongs to the methylthiotransferase family. RimO subfamily. [4Fe-4S] cluster is required as a cofactor.

Its subcellular location is the cytoplasm. It catalyses the reaction L-aspartate(89)-[ribosomal protein uS12]-hydrogen + (sulfur carrier)-SH + AH2 + 2 S-adenosyl-L-methionine = 3-methylsulfanyl-L-aspartate(89)-[ribosomal protein uS12]-hydrogen + (sulfur carrier)-H + 5'-deoxyadenosine + L-methionine + A + S-adenosyl-L-homocysteine + 2 H(+). In terms of biological role, catalyzes the methylthiolation of an aspartic acid residue of ribosomal protein uS12. In Burkholderia vietnamiensis (strain G4 / LMG 22486) (Burkholderia cepacia (strain R1808)), this protein is Ribosomal protein uS12 methylthiotransferase RimO.